Consider the following 87-residue polypeptide: Mitochondrial import inner membrane translocase subunit TIM9 (87 aa).

The Twin CX3C motif signature appears at 35–59; sequence CFSDCVNDFTSSKLTSKEQTCIMRC. Cystine bridges form between Cys-35–Cys-59 and Cys-39–Cys-55.

The protein belongs to the small Tim family. Heterohexamer; composed of 3 copies of TIM9 and 3 copies of TIM10, named soluble 70 kDa complex. Associates with the TIM22 complex, whose core is composed of TIM22 and TIM54. Interacts with the transmembrane regions of multi-pass transmembrane proteins in transit.

The protein localises to the mitochondrion inner membrane. In terms of biological role, mitochondrial intermembrane chaperone that participates in the import and insertion of multi-pass transmembrane proteins into the mitochondrial inner membrane. Also required for the transfer of beta-barrel precursors from the TOM complex to the sorting and assembly machinery (SAM complex) of the outer membrane. Acts as a chaperone-like protein that protects the hydrophobic precursors from aggregation and guide them through the mitochondrial intermembrane space. The chain is Mitochondrial import inner membrane translocase subunit TIM9 (TIM9) from Eremothecium gossypii (strain ATCC 10895 / CBS 109.51 / FGSC 9923 / NRRL Y-1056) (Yeast).